A 119-amino-acid chain; its full sequence is Short coiled-coil protein A (119 aa).

Residues 1 to 10 (MEGDVDEDDG) are compositionally biased toward acidic residues. The segment at 1 to 26 (MEGDVDEDDGTFTNISLADDSADGEP) is disordered. Positions 48–95 (MENQVEQEEKTRLINQVLELQHTLEDLSARVDAVKEENLKLKSENQVL) form a coiled coil.

Belongs to the SCOC family.

The protein localises to the golgi apparatus membrane. It localises to the golgi apparatus. It is found in the trans-Golgi network. The protein resides in the cytoplasm. Its subcellular location is the cytosol. Functionally, positive regulator of amino acid starvation-induced autophagy. The chain is Short coiled-coil protein A (scoca) from Danio rerio (Zebrafish).